The sequence spans 387 residues: 3-ketoacyl-CoA thiolase (387 aa).

Cys91 (acyl-thioester intermediate) is an active-site residue. Catalysis depends on proton acceptor residues His343 and Cys373.

Belongs to the thiolase-like superfamily. Thiolase family. Heterotetramer of two alpha chains (FadB) and two beta chains (FadA).

It localises to the cytoplasm. It catalyses the reaction an acyl-CoA + acetyl-CoA = a 3-oxoacyl-CoA + CoA. The protein operates within lipid metabolism; fatty acid beta-oxidation. Its function is as follows. Catalyzes the final step of fatty acid oxidation in which acetyl-CoA is released and the CoA ester of a fatty acid two carbons shorter is formed. The polypeptide is 3-ketoacyl-CoA thiolase (Aeromonas salmonicida (strain A449)).